Here is a 192-residue protein sequence, read N- to C-terminus: Flavin prenyltransferase UbiX (192 aa).

Residues Gly10–Ser12, Ser36, Ser92–Thr95, and Arg127 each bind FMN. Dimethylallyl phosphate-binding residues include Tyr157 and Lys173.

This sequence belongs to the UbiX/PAD1 family.

It carries out the reaction dimethylallyl phosphate + FMNH2 = prenylated FMNH2 + phosphate. Functionally, flavin prenyltransferase that catalyzes the synthesis of the prenylated FMN cofactor (prenyl-FMN) for 4-hydroxy-3-polyprenylbenzoic acid decarboxylase UbiD. The prenyltransferase is metal-independent and links a dimethylallyl moiety from dimethylallyl monophosphate (DMAP) to the flavin N5 and C6 atoms of FMN. The protein is Flavin prenyltransferase UbiX of Chlamydia muridarum (strain MoPn / Nigg).